A 248-amino-acid polypeptide reads, in one-letter code: Probable transcriptional regulatory protein PSPA7_4544 (248 aa).

This sequence belongs to the TACO1 family.

It is found in the cytoplasm. In Pseudomonas paraeruginosa (strain DSM 24068 / PA7) (Pseudomonas aeruginosa (strain PA7)), this protein is Probable transcriptional regulatory protein PSPA7_4544.